A 97-amino-acid chain; its full sequence is uncharacterized protein (97 aa).

Positions 58–97 are disordered; the sequence is SLLLPRTVQTGGTEREKPGPGQRKRGAHCSACKRSSTRPS.

This is an uncharacterized protein from Homo sapiens (Human).